A 263-amino-acid chain; its full sequence is Putative hydro-lyase Pden_0321 (263 aa).

Belongs to the D-glutamate cyclase family.

The sequence is that of Putative hydro-lyase Pden_0321 from Paracoccus denitrificans (strain Pd 1222).